We begin with the raw amino-acid sequence, 435 residues long: 3-phosphoshikimate 1-carboxyvinyltransferase (435 aa).

K23, S24, and R28 together coordinate 3-phosphoshikimate. A phosphoenolpyruvate-binding site is contributed by K23. Phosphoenolpyruvate contacts are provided by G97 and R125. Positions 170, 171, 172, 198, 314, 338, and 342 each coordinate 3-phosphoshikimate. Q172 contributes to the phosphoenolpyruvate binding site. D314 acts as the Proton acceptor in catalysis. Residues R346, R388, and K413 each coordinate phosphoenolpyruvate.

The protein belongs to the EPSP synthase family. Monomer.

It is found in the cytoplasm. It carries out the reaction 3-phosphoshikimate + phosphoenolpyruvate = 5-O-(1-carboxyvinyl)-3-phosphoshikimate + phosphate. The protein operates within metabolic intermediate biosynthesis; chorismate biosynthesis; chorismate from D-erythrose 4-phosphate and phosphoenolpyruvate: step 6/7. In terms of biological role, catalyzes the transfer of the enolpyruvyl moiety of phosphoenolpyruvate (PEP) to the 5-hydroxyl of shikimate-3-phosphate (S3P) to produce enolpyruvyl shikimate-3-phosphate and inorganic phosphate. The sequence is that of 3-phosphoshikimate 1-carboxyvinyltransferase from Sodalis glossinidius (strain morsitans).